The chain runs to 2219 residues: E3 ubiquitin-protein ligase Ubr3 (2219 aa).

2 disordered regions span residues methionine 1–serine 48 and alanine 78–serine 134. Positions valine 20 to methionine 29 are enriched in basic and acidic residues. The span at glutamate 31 to serine 42 shows a compositional bias: acidic residues. Residues glycine 114 to serine 134 show a composition bias toward low complexity. The UBR-type zinc finger occupies alanine 222–isoleucine 293. Disordered regions lie at residues serine 1348–valine 1367 and glutamine 1440–glutamate 1464. Positions aspartate 1353–valine 1367 are enriched in acidic residues. An RING-type; degenerate zinc finger spans residues cysteine 1607–arginine 1643. Disordered regions lie at residues valine 1872–glutamine 1902 and serine 1935–serine 1954. Residues serine 1877–alanine 1888 are compositionally biased toward low complexity.

The protein belongs to the E3 ubiquitin-protein ligase UBR1-like family. In terms of assembly, selectively interacts (via UBR-type zinc finger) with the cleaved form of Diap1; this interaction is enhanced by tal. Interacts with tal and Rrp1. Interacts with ovo isoform B (via N-terminus). Interacts with Cad99C (via the cytoplasmic domain). Interacts with ck and Sans. Interacts with cos (via Kinesin motor domain). In vitro, self-ubiquitination in the presence of E1, E2 and ubiquitin.

The protein localises to the cytoplasm. Its subcellular location is the nucleus. It carries out the reaction S-ubiquitinyl-[E2 ubiquitin-conjugating enzyme]-L-cysteine + [acceptor protein]-L-lysine = [E2 ubiquitin-conjugating enzyme]-L-cysteine + N(6)-ubiquitinyl-[acceptor protein]-L-lysine.. It functions in the pathway protein modification; protein ubiquitination. Functionally, E3 ubiquitin-protein ligase which is a component of the N-end rule pathway. Recognizes and binds to proteins bearing specific N-terminal residues, leading to their ubiquitination and subsequent degradation. Binds to the E3 ubiquitin-protein ligase Diap1 and enhances its ubiquitination and anti-apoptotic functions. Essential during trichome development for the ubiquitination of the N-terminus of ovo isoform B (svb), converting it from a transcriptional inhibitor to an activator. Positively regulates a hh-signaling pathway which functions in photoreceptor differentiation. Activation of hh up-regulates transcription of Ubr3, which in turn promotes hh signaling by mediating the ubiquitination and degradation of cos. Necessary for auditory transduction: plays a role in Johnston's organ organization by acting in the regulation of zip and ck function in scolopidial apical attachment. Likely to function by acting in a pathway that negatively regulates the ubiquitination of zip, consequently affecting its interaction with ck. May also negatively regulate a component of the SCF (SKP1-CUL1-F-box protein) E3 ubiquitin-protein ligase complex Cul1, which also appears to function in the negative regulation of the zip-ck interaction and scolopidial apical attachment. The chain is E3 ubiquitin-protein ligase Ubr3 from Drosophila melanogaster (Fruit fly).